Here is a 233-residue protein sequence, read N- to C-terminus: Octanoyltransferase (233 aa).

Residues 34-214 (GQAPSTVLLL…EFSAREATLI (181 aa)) form the BPL/LPL catalytic domain. Residues 72-79 (RGGKLTWH), 144-146 (AIG), and 157-159 (GFS) contribute to the substrate site. C175 serves as the catalytic Acyl-thioester intermediate.

This sequence belongs to the LipB family.

The protein resides in the cytoplasm. The enzyme catalyses octanoyl-[ACP] + L-lysyl-[protein] = N(6)-octanoyl-L-lysyl-[protein] + holo-[ACP] + H(+). Its pathway is protein modification; protein lipoylation via endogenous pathway; protein N(6)-(lipoyl)lysine from octanoyl-[acyl-carrier-protein]: step 1/2. In terms of biological role, catalyzes the transfer of endogenously produced octanoic acid from octanoyl-acyl-carrier-protein onto the lipoyl domains of lipoate-dependent enzymes. Lipoyl-ACP can also act as a substrate although octanoyl-ACP is likely to be the physiological substrate. This chain is Octanoyltransferase, found in Renibacterium salmoninarum (strain ATCC 33209 / DSM 20767 / JCM 11484 / NBRC 15589 / NCIMB 2235).